The following is a 146-amino-acid chain: Angiogenin (146 aa).

Positions 1–24 (MVMGLGLFLLVFMLGLGLTLPTLA) are cleaved as a signal peptide. Glutamine 25 carries the pyrrolidone carboxylic acid modification. Residue histidine 37 is the Proton acceptor of the active site. Position 45 (arginine 45) interacts with tRNA. 3 cysteine pairs are disulfide-bonded: cysteine 50–cysteine 105, cysteine 63–cysteine 116, and cysteine 81–cysteine 131. A Nucleolar localization signal motif is present at residues 55–59 (RRRHL). TRNA contacts are provided by cysteine 105 and isoleucine 127. The active-site Proton donor is histidine 138.

The protein belongs to the pancreatic ribonuclease family. In terms of assembly, homodimer. Interacts with RNH1; inhibiting ANG ribonuclease activity. Interacts with PCNA.

Its subcellular location is the secreted. The protein resides in the nucleus. It localises to the nucleolus. The protein localises to the cytoplasm. It is found in the stress granule. Has weak tRNA ribonuclease activity by itself due to partial autoinhibition by its C-terminus, which folds into a short alpha-helix that partially occludes the substrate-binding site. In absence of stress, the ribonuclease activity is inhibited by RNH1 in the cytoplasm. In response to stress, dissociates from RNH1 in the cytoplasm and associates with cytoplasmic ribosomes with vacant A-sites: ribosomes directly activate the tRNA ribonuclease activity of ANG by refolding the C-terminal alpha-helix. In response to stress, the angiogenic activity of ANG is inhibited by RNH1 in the nucleus. In terms of biological role, secreted ribonuclease that can either promote or restrict cell proliferation of target cells, depending on the context. Endocytosed in target cells via its receptor PLXNB2 and translocates to the cytoplasm or nucleus. Under stress conditions, localizes to the cytoplasm and promotes the assembly of stress granules (SGs): specifically cleaves a subset of tRNAs within anticodon loops to produce tRNA-derived stress-induced fragments (tiRNAs), resulting in translation repression and inhibition of cell proliferation. tiRNas also prevent formation of apoptosome, thereby promoting cell survival. Preferentially cleaves RNAs between a pyrimidine and an adenosine residue, suggesting that it cleaves the anticodon loop of tRNA(Ala) (32-UUAGCAU-38) after positions 33 and 36. Cleaves a subset of tRNAs, including tRNA(Ala), tRNA(Glu), tRNA(Gly), tRNA(Lys), tRNA(Val), tRNA(His), tRNA(Asp) and tRNA(Sec). Under growth conditions and in differentiated cells, translocates to the nucleus and stimulates ribosomal RNA (rRNA) transcription, including that containing the initiation site sequences of 45S rRNA, thereby promoting cell growth and proliferation. Angiogenin induces vascularization of normal and malignant tissues via its ability to promote rRNA transcription. Involved in hematopoietic stem and progenitor cell (HSPC) growth and survival by promoting rRNA transcription in growth conditions and inhibiting translation in response to stress, respectively. Mediates the crosstalk between myeloid and intestinal epithelial cells to protect the intestinal epithelial barrier integrity: secreted by myeloid cells and promotes intestinal epithelial cells proliferation and survival. Also mediates osteoclast-endothelial cell crosstalk in growing bone: produced by osteoclasts and protects the neighboring vascular cells against senescence by promoting rRNA transcription. In Papio hamadryas (Hamadryas baboon), this protein is Angiogenin (ANG).